A 236-amino-acid chain; its full sequence is DNA repair protein RecO (236 aa).

The protein belongs to the RecO family.

Involved in DNA repair and RecF pathway recombination. The polypeptide is DNA repair protein RecO (Rickettsia typhi (strain ATCC VR-144 / Wilmington)).